Consider the following 298-residue polypeptide: Elongation factor Ts (298 aa).

The interval 79 to 82 (TDFV) is involved in Mg(2+) ion dislocation from EF-Tu.

Belongs to the EF-Ts family.

The protein resides in the cytoplasm. Associates with the EF-Tu.GDP complex and induces the exchange of GDP to GTP. It remains bound to the aminoacyl-tRNA.EF-Tu.GTP complex up to the GTP hydrolysis stage on the ribosome. The sequence is that of Elongation factor Ts from Cereibacter sphaeroides (strain ATCC 17029 / ATH 2.4.9) (Rhodobacter sphaeroides).